The following is a 352-amino-acid chain: Staphylococcal superantigen-like 3 (352 aa).

An N-terminal signal peptide occupies residues 1 to 30 (MKMRTIAKTSLALGLLTTGAITVTTQSVKA). Residues 61 to 165 (ATTQAANTRQ…TIKQAQTDMT (105 aa)) form a disordered region. Positions 69 to 104 (RQERTPKLEKAPNTNEEKTSASKIEKISQPKQEEQK) are enriched in basic and acidic residues. A compositionally biased stretch (low complexity) spans 114–141 (PKQEQSQTTTESTTPKTKVTTPPSTNTP). The span at 142–164 (QPMQSTKSDTPQSPTIKQAQTDM) shows a compositional bias: polar residues. Positions 228 to 326 (IDVFIVLEDN…VIKMKNGGKY (99 aa)) are sialyl Lewis X-binding.

This sequence belongs to the staphylococcal/streptococcal toxin family. As to quaternary structure, interacts with host TLR2 (via its extracellular domain).

Its subcellular location is the secreted. Secreted protein that plays an essential role in immune innate response inhibition by interacting with and inhibiting host TLR2. In turn, bacteria recognition by immune cells is impaired and cytokine production is inhibited. Mechanistically, by interacting with TLR2, blocks ligand binding and thus inhibits activation. Second, by interacting with an already formed TLR2-lipopeptide complex, prevents TLR heterodimerization and downstream signaling. The interaction with host TLR2 does not involve sialyl Lewis X interactions. This is Staphylococcal superantigen-like 3 from Staphylococcus aureus (strain Newman).